We begin with the raw amino-acid sequence, 402 residues long: Olfactomedin-like protein 1 (402 aa).

A signal peptide spans Met1–Asp28. Asn66 is a glycosylation site (N-linked (GlcNAc...) asparagine). A coiled-coil region spans residues Arg73–Thr135. Asn138 and Asn183 each carry an N-linked (GlcNAc...) asparagine glycan. The Olfactomedin-like domain occupies Ser140–Lys397. A disulfide bond links Cys141 and Cys324.

Highly N-glycosylated.

The protein localises to the secreted. The protein is Olfactomedin-like protein 1 (Olfml1) of Rattus norvegicus (Rat).